We begin with the raw amino-acid sequence, 427 residues long: Enolase (427 aa).

Gln-163 is a (2R)-2-phosphoglycerate binding site. Glu-205 (proton donor) is an active-site residue. Asp-242, Glu-285, and Asp-312 together coordinate Mg(2+). Residues Lys-337, Arg-366, Ser-367, and Lys-388 each coordinate (2R)-2-phosphoglycerate. Catalysis depends on Lys-337, which acts as the Proton acceptor.

This sequence belongs to the enolase family. Mg(2+) serves as cofactor.

It is found in the cytoplasm. Its subcellular location is the secreted. The protein localises to the cell surface. The enzyme catalyses (2R)-2-phosphoglycerate = phosphoenolpyruvate + H2O. It functions in the pathway carbohydrate degradation; glycolysis; pyruvate from D-glyceraldehyde 3-phosphate: step 4/5. Functionally, catalyzes the reversible conversion of 2-phosphoglycerate (2-PG) into phosphoenolpyruvate (PEP). It is essential for the degradation of carbohydrates via glycolysis. The chain is Enolase from Rhodopseudomonas palustris (strain BisA53).